The following is a 184-amino-acid chain: Large ribosomal subunit protein eL13 (184 aa).

A disordered region spans residues Pro-28 to Pro-53. The span at Lys-31–Ala-42 shows a compositional bias: basic residues.

Belongs to the eukaryotic ribosomal protein eL13 family.

In Schistosoma mansoni (Blood fluke), this protein is Large ribosomal subunit protein eL13 (RPL13).